The chain runs to 393 residues: NAD(P)H-quinone oxidoreductase subunit H, chloroplastic (393 aa).

It belongs to the complex I 49 kDa subunit family. NDH is composed of at least 16 different subunits, 5 of which are encoded in the nucleus.

The protein localises to the plastid. The protein resides in the chloroplast thylakoid membrane. The enzyme catalyses a plastoquinone + NADH + (n+1) H(+)(in) = a plastoquinol + NAD(+) + n H(+)(out). It catalyses the reaction a plastoquinone + NADPH + (n+1) H(+)(in) = a plastoquinol + NADP(+) + n H(+)(out). NDH shuttles electrons from NAD(P)H:plastoquinone, via FMN and iron-sulfur (Fe-S) centers, to quinones in the photosynthetic chain and possibly in a chloroplast respiratory chain. The immediate electron acceptor for the enzyme in this species is believed to be plastoquinone. Couples the redox reaction to proton translocation, and thus conserves the redox energy in a proton gradient. This Lolium perenne (Perennial ryegrass) protein is NAD(P)H-quinone oxidoreductase subunit H, chloroplastic.